We begin with the raw amino-acid sequence, 116 residues long: uncharacterized protein (116 aa).

The helical transmembrane segment at 58 to 78 (IIVDFKFIFQIFLILSFGFFA) threads the bilayer.

Its subcellular location is the membrane. This is an uncharacterized protein from Rickettsia prowazekii (strain Madrid E).